We begin with the raw amino-acid sequence, 484 residues long: Putative sodium/proton-dependent alanine carrier protein YrbD (484 aa).

Helical transmembrane passes span Val11–Met31, Ala66–Pro88, Phe92–Ile114, Trp139–Val159, Phe172–Phe192, Ile205–Val225, Ser238–Val258, Ala292–Phe312, Gly350–Ala370, Trp390–Thr410, and Ala416–Leu436.

This sequence belongs to the alanine or glycine:cation symporter (AGCS) (TC 2.A.25) family.

The protein resides in the cell membrane. This chain is Putative sodium/proton-dependent alanine carrier protein YrbD (yrbD), found in Bacillus subtilis (strain 168).